Here is a 216-residue protein sequence, read N- to C-terminus: Cytochrome c biogenesis ATP-binding export protein CcmA (216 aa).

The 214-residue stretch at 2 to 215 (LSVEELSCVR…SNHLRKIKLG (214 aa)) folds into the ABC transporter domain. 34–41 (GHNGAGKT) lines the ATP pocket.

The protein belongs to the ABC transporter superfamily. CcmA exporter (TC 3.A.1.107) family. As to quaternary structure, the complex is composed of two ATP-binding proteins (CcmA) and two transmembrane proteins (CcmB).

The protein resides in the cell inner membrane. The enzyme catalyses heme b(in) + ATP + H2O = heme b(out) + ADP + phosphate + H(+). Part of the ABC transporter complex CcmAB involved in the biogenesis of c-type cytochromes; once thought to export heme, this seems not to be the case, but its exact role is uncertain. Responsible for energy coupling to the transport system. This Photobacterium profundum (strain SS9) protein is Cytochrome c biogenesis ATP-binding export protein CcmA.